Reading from the N-terminus, the 531-residue chain is 5-(hydroxymethyl)furfural oxidase (531 aa).

FAD-binding positions include 15–16 (TA), 36–37 (EA), Trp-68, Leu-94, Gly-98, 102–105 (NMVV), Val-233, and Trp-466. His-467 acts as the Proton acceptor in catalysis. FAD is bound by residues Ala-501 and 512–513 (TN).

This sequence belongs to the GMC oxidoreductase family. As to quaternary structure, monomer. FAD is required as a cofactor.

It catalyses the reaction 5-hydroxymethylfurfural + 3 O2 + 2 H2O = 2,5-dicarboxyfuran + 3 H2O2 + 2 H(+). It carries out the reaction benzylthiol + O2 = benzothialdehyde + H2O2. Its function is as follows. Involved in the degradation and detoxification of 5-(hydroxymethyl)furfural (HMF) by mediating its oxidation to furan-2,5-dicarboxylate (FDCA), a biobased platform chemical for the production of polymers. Active with a wide range of aromatic and aliphatic primary alcohols and aldehydes: acts on alcohol groups and requires the spontaneous hydration of aldehyde groups for their oxidation. To a lesser extent, is also able to catalyze the oxidation of thiols that are structurally similar to its alcohol substrates, yielding the corresponding thiocarbonyls. The protein is 5-(hydroxymethyl)furfural oxidase of Methylovorus sp. (strain MP688).